The following is a 127-amino-acid chain: uncharacterized protein (127 aa).

The chain crosses the membrane as a helical span at residues 84 to 103 (IALLSLFISLSIRITCFPFF).

It localises to the membrane. This is an uncharacterized protein from Saccharomyces cerevisiae (strain ATCC 204508 / S288c) (Baker's yeast).